Consider the following 176-residue polypeptide: ATP synthase subunit delta (176 aa).

It belongs to the ATPase delta chain family. As to quaternary structure, F-type ATPases have 2 components, F(1) - the catalytic core - and F(0) - the membrane proton channel. F(1) has five subunits: alpha(3), beta(3), gamma(1), delta(1), epsilon(1). F(0) has three main subunits: a(1), b(2) and c(10-14). The alpha and beta chains form an alternating ring which encloses part of the gamma chain. F(1) is attached to F(0) by a central stalk formed by the gamma and epsilon chains, while a peripheral stalk is formed by the delta and b chains.

It is found in the cell membrane. In terms of biological role, f(1)F(0) ATP synthase produces ATP from ADP in the presence of a proton or sodium gradient. F-type ATPases consist of two structural domains, F(1) containing the extramembraneous catalytic core and F(0) containing the membrane proton channel, linked together by a central stalk and a peripheral stalk. During catalysis, ATP synthesis in the catalytic domain of F(1) is coupled via a rotary mechanism of the central stalk subunits to proton translocation. Functionally, this protein is part of the stalk that links CF(0) to CF(1). It either transmits conformational changes from CF(0) to CF(1) or is implicated in proton conduction. The protein is ATP synthase subunit delta of Wigglesworthia glossinidia brevipalpis.